The chain runs to 394 residues: Elongation factor Tu (394 aa).

In terms of domain architecture, tr-type G spans 10–204 (RTHINVGTIG…ILDNYIPEPK (195 aa)). Residues 19-26 (GHVDHGKT) form a G1 region. 19 to 26 (GHVDHGKT) contacts GTP. Thr-26 is a Mg(2+) binding site. A G2 region spans residues 60–64 (GITIN). The interval 81–84 (DCPG) is G3. GTP-binding positions include 81–85 (DCPGH) and 136–139 (NKCD). Residues 136–139 (NKCD) form a G4 region. The G5 stretch occupies residues 174 to 176 (SAL).

This sequence belongs to the TRAFAC class translation factor GTPase superfamily. Classic translation factor GTPase family. EF-Tu/EF-1A subfamily. In terms of assembly, monomer.

The protein localises to the cytoplasm. It carries out the reaction GTP + H2O = GDP + phosphate + H(+). In terms of biological role, GTP hydrolase that promotes the GTP-dependent binding of aminoacyl-tRNA to the A-site of ribosomes during protein biosynthesis. This Blochmanniella floridana protein is Elongation factor Tu.